The sequence spans 988 residues: Ubiquitin carboxyl-terminal hydrolase 36 (988 aa).

The interval 16-55 is disordered; it reads PTLRTDNNGARKQAEHPNNQSHHNHPHPTSNPNELPKPKR. Residues 31–48 are compositionally biased toward low complexity; sequence HPNNQSHHNHPHPTSNPN. The region spanning 78-386 is the USP domain; the sequence is TGMINVGNTC…NAYIMFFELD (309 aa). C87 functions as the Nucleophile in the catalytic mechanism. The active-site Proton acceptor is the H345. Disordered stretches follow at residues 393–422, 483–782, and 868–988; these read PPAN…SPSP, ATSA…VTSN, and EQRQ…QQQT. Low complexity-rich tracts occupy residues 408-422 and 490-509; these read STTP…SPSP and NGNK…KSIN. Phosphoserine is present on residues S419 and S421. A compositionally biased stretch (polar residues) spans 532–544; sequence TTAQLPSMPNMTE. Phosphothreonine occurs at positions 561 and 565. Residues S575 and S577 each carry the phosphoserine modification. Acidic residues predominate over residues 592–601; the sequence is EGEDFSESDQ. Positions 602–631 are enriched in polar residues; it reads ESGQTNGHSKTNGSLTNGSASSSVHVNNSK. Residues 632 to 649 are compositionally biased toward basic and acidic residues; it reads QKTDAIDEIFKSLKKSAD. Phosphoserine is present on S650. Acidic residues predominate over residues 650-659; it reads SEEDDDEEEP. Positions 669-679 are enriched in low complexity; that stretch reads PQKQSQSQSKA. A compositionally biased stretch (pro residues) spans 680 to 689; it reads PPSPKTPPSP. At S682 the chain carries Phosphoserine. Position 685 is a phosphothreonine (T685). S688 bears the Phosphoserine mark. The segment covering 707–717 has biased composition (acidic residues); it reads VDAIDDDDDAV. The residue at position 728 (T728) is a Phosphothreonine. Polar residues predominate over residues 735 to 747; that stretch reads NPFSSSKPSTDSP. S746 is subject to Phosphoserine. Position 749 is a phosphothreonine (T749). The span at 762-782 shows a compositional bias: polar residues; sequence ALKSHQQPRVGNGYQSNVTSN. 2 stretches are compositionally biased toward low complexity: residues 892-903 and 930-943; these read SGSAKGNNASNS and RFHN…FQQR.

This sequence belongs to the peptidase C19 family. In terms of assembly, interacts with atms/PAF1, but not with CycT.

It is found in the nucleus. The protein resides in the nucleolus. The enzyme catalyses Thiol-dependent hydrolysis of ester, thioester, amide, peptide and isopeptide bonds formed by the C-terminal Gly of ubiquitin (a 76-residue protein attached to proteins as an intracellular targeting signal).. Its function is as follows. Required for maintaining multiple types of adult stem cells, including male and female germline, epithelial follicle cell and intestinal stem cells. May function as a transcriptional repressor by continually deubiquiting histone H2B at the promoters of genes critical for cellular differentiation, thereby preventing histone H3 'Lys-4' trimethylation (H3K4). Controls selective autophagy activation by ubiquitinated proteins. This is Ubiquitin carboxyl-terminal hydrolase 36 (Usp36) from Drosophila simulans (Fruit fly).